The following is a 168-amino-acid chain: Photosystem I assembly protein Ycf3 (168 aa).

3 TPR repeats span residues alanine 35–proline 68, serine 72–leucine 105, and glycine 120–asparagine 153.

It belongs to the Ycf3 family.

It is found in the plastid. Its subcellular location is the chloroplast thylakoid membrane. In terms of biological role, essential for the assembly of the photosystem I (PSI) complex. May act as a chaperone-like factor to guide the assembly of the PSI subunits. The chain is Photosystem I assembly protein Ycf3 from Amborella trichopoda.